We begin with the raw amino-acid sequence, 110 residues long: Phosphoribosyl-ATP pyrophosphatase (110 aa).

Belongs to the PRA-PH family.

It is found in the cytoplasm. It catalyses the reaction 1-(5-phospho-beta-D-ribosyl)-ATP + H2O = 1-(5-phospho-beta-D-ribosyl)-5'-AMP + diphosphate + H(+). It functions in the pathway amino-acid biosynthesis; L-histidine biosynthesis; L-histidine from 5-phospho-alpha-D-ribose 1-diphosphate: step 2/9. In Clostridium botulinum (strain Kyoto / Type A2), this protein is Phosphoribosyl-ATP pyrophosphatase.